Consider the following 232-residue polypeptide: Orotidine 5'-phosphate decarboxylase (232 aa).

Residues Asp-11, Lys-33, 60 to 69 (DLKLYDIPNT), Thr-119, Arg-180, Gln-189, Gly-209, and Arg-210 each bind substrate. The active-site Proton donor is Lys-62.

It belongs to the OMP decarboxylase family. Type 1 subfamily. In terms of assembly, homodimer.

It catalyses the reaction orotidine 5'-phosphate + H(+) = UMP + CO2. It participates in pyrimidine metabolism; UMP biosynthesis via de novo pathway; UMP from orotate: step 2/2. Its function is as follows. Catalyzes the decarboxylation of orotidine 5'-monophosphate (OMP) to uridine 5'-monophosphate (UMP). This chain is Orotidine 5'-phosphate decarboxylase, found in Wigglesworthia glossinidia brevipalpis.